A 910-amino-acid chain; its full sequence is DNA mismatch repair protein MutS (910 aa).

607 to 614 contacts ATP; the sequence is GPNMAGKS.

It belongs to the DNA mismatch repair MutS family.

In terms of biological role, this protein is involved in the repair of mismatches in DNA. It is possible that it carries out the mismatch recognition step. This protein has a weak ATPase activity. This chain is DNA mismatch repair protein MutS, found in Geobacillus thermodenitrificans (strain NG80-2).